The following is a 178-amino-acid chain: Sec-independent protein translocase protein TatB (178 aa).

Residues 2-22 (LPEIGAAELLIIAAVALIVVG) traverse the membrane as a helical segment. The interval 104 to 178 (HSPTGYENTV…KARKTAGSAE (75 aa)) is disordered. Residues 114–131 (EPPPPEPEPQPAAEPAPK) are compositionally biased toward pro residues. Over residues 141-154 (PKAAAAPKAAAKPK) the composition is skewed to low complexity.

The protein belongs to the TatB family. In terms of assembly, the Tat system comprises two distinct complexes: a TatABC complex, containing multiple copies of TatA, TatB and TatC subunits, and a separate TatA complex, containing only TatA subunits. Substrates initially bind to the TatABC complex, which probably triggers association of the separate TatA complex to form the active translocon.

It localises to the cell inner membrane. In terms of biological role, part of the twin-arginine translocation (Tat) system that transports large folded proteins containing a characteristic twin-arginine motif in their signal peptide across membranes. Together with TatC, TatB is part of a receptor directly interacting with Tat signal peptides. TatB may form an oligomeric binding site that transiently accommodates folded Tat precursor proteins before their translocation. This Phenylobacterium zucineum (strain HLK1) protein is Sec-independent protein translocase protein TatB.